We begin with the raw amino-acid sequence, 295 residues long: bZIP transcription factor 60 (295 aa).

Residues 101–154 (PAAADDSGKENSDLVVEKKSNDSGSEIHDDDDEEGDDDAVAKKRRRRVRNRDAA) are disordered. Basic and acidic residues predominate over residues 106-127 (DSGKENSDLVVEKKSNDSGSEI). The span at 128–138 (HDDDDEEGDDD) shows a compositional bias: acidic residues. The region spanning 140 to 203 (VAKKRRRRVR…QSLRYCLQKG (64 aa)) is the bZIP domain. Residues 142 to 162 (KKRRRRVRNRDAAVRSRERKK) form a basic motif region. A leucine-zipper region spans residues 168-182 (LEKKSKYLERECLRL). Residues 224–244 (LLLGSLLWLLGVNFICLFPYM) traverse the membrane as a helical segment.

This sequence belongs to the bZIP family. As to quaternary structure, interacts with BZIP28. Expressed in seedlings, rosette and cauline leaves, stems, buds, flowers, siliques, immature seeds, anthers and pollen grains.

Its subcellular location is the endoplasmic reticulum membrane. The protein localises to the nucleus. Transcription factor involved in the unfolded protein response (UPR). Acts during endoplasmic reticulum stress (ER) by activating unfolded protein response (UPR) target genes via direct binding to the UPR element (UPRE). Plays a role in plant immunity and abiotic stress responses. This chain is bZIP transcription factor 60, found in Arabidopsis thaliana (Mouse-ear cress).